Reading from the N-terminus, the 366-residue chain is UPF0329 protein ECU01_0130/ECU01_1480/ECU08_0060 (366 aa).

A disordered region spans residues 325-366; it reads IRKEEKRIRKEEERAKNEEELLRMVESEEGKSGEGEEGCRRG.

The protein belongs to the UPF0329 family.

The sequence is that of UPF0329 protein ECU01_0130/ECU01_1480/ECU08_0060 from Encephalitozoon cuniculi (strain GB-M1) (Microsporidian parasite).